The sequence spans 457 residues: Phosphomethylpyrimidine synthase (457 aa).

Residues Asn80, Met109, Tyr139, His175, 195–197 (SRG), 236–239 (DSLR), and Glu275 each bind substrate. Position 279 (His279) interacts with Zn(2+). Tyr302 contacts substrate. His343 is a binding site for Zn(2+). Positions 423, 426, and 431 each coordinate [4Fe-4S] cluster.

Belongs to the ThiC family. [4Fe-4S] cluster serves as cofactor.

It carries out the reaction 5-amino-1-(5-phospho-beta-D-ribosyl)imidazole + S-adenosyl-L-methionine = 4-amino-2-methyl-5-(phosphooxymethyl)pyrimidine + CO + 5'-deoxyadenosine + formate + L-methionine + 3 H(+). It participates in cofactor biosynthesis; thiamine diphosphate biosynthesis. Functionally, catalyzes the synthesis of the hydroxymethylpyrimidine phosphate (HMP-P) moiety of thiamine from aminoimidazole ribotide (AIR) in a radical S-adenosyl-L-methionine (SAM)-dependent reaction. The sequence is that of Phosphomethylpyrimidine synthase from Trichormus variabilis (strain ATCC 29413 / PCC 7937) (Anabaena variabilis).